We begin with the raw amino-acid sequence, 247 residues long: Large ribosomal subunit protein uL3 (247 aa).

Disordered stretches follow at residues 124–145 (RLGQSRGPMAHGSRYHRRPGSM) and 218–247 (VGQEVKAEAKDTASTEKKQAETKNDSASAE). A compositionally biased stretch (basic and acidic residues) spans 222–241 (VKAEAKDTASTEKKQAETKN).

This sequence belongs to the universal ribosomal protein uL3 family. As to quaternary structure, part of the 50S ribosomal subunit. Forms a cluster with proteins L14 and L19.

In terms of biological role, one of the primary rRNA binding proteins, it binds directly near the 3'-end of the 23S rRNA, where it nucleates assembly of the 50S subunit. The chain is Large ribosomal subunit protein uL3 from Oenococcus oeni (strain ATCC BAA-331 / PSU-1).